The primary structure comprises 360 residues: Ribosomal RNA large subunit methyltransferase M (360 aa).

S-adenosyl-L-methionine is bound by residues Ser-190, 223 to 226, Asp-242, Asp-262, and Asp-280; that span reads CPGG. Residue Lys-309 is the Proton acceptor of the active site.

This sequence belongs to the class I-like SAM-binding methyltransferase superfamily. RNA methyltransferase RlmE family. RlmM subfamily. Monomer.

It localises to the cytoplasm. It catalyses the reaction cytidine(2498) in 23S rRNA + S-adenosyl-L-methionine = 2'-O-methylcytidine(2498) in 23S rRNA + S-adenosyl-L-homocysteine + H(+). Catalyzes the 2'-O-methylation at nucleotide C2498 in 23S rRNA. This chain is Ribosomal RNA large subunit methyltransferase M, found in Haemophilus ducreyi (strain 35000HP / ATCC 700724).